Here is a 382-residue protein sequence, read N- to C-terminus: D-galactonate dehydratase (382 aa).

A Mg(2+)-binding site is contributed by D183. The active-site Proton donor is the H185. Residues E209 and E235 each contribute to the Mg(2+) site. The active-site Proton acceptor is H285.

Belongs to the mandelate racemase/muconate lactonizing enzyme family. GalD subfamily. Mg(2+) serves as cofactor.

It carries out the reaction D-galactonate = 2-dehydro-3-deoxy-D-galactonate + H2O. The protein operates within carbohydrate acid metabolism; D-galactonate degradation; D-glyceraldehyde 3-phosphate and pyruvate from D-galactonate: step 1/3. In terms of biological role, catalyzes the dehydration of D-galactonate to 2-keto-3-deoxy-D-galactonate. In Escherichia coli O45:K1 (strain S88 / ExPEC), this protein is D-galactonate dehydratase.